A 335-amino-acid polypeptide reads, in one-letter code: MSLPFLGPMSLSGFEHSWFFLFLLVVAGLAALYILMQLARQRRMLRFANMELLESVAPKRPSTWRHLPAILLVASLVLFTIAMAGPTNDVRIPRNRAVVMLVIDVSQSMRATDVAPNRMAAAQEAAKQFADELTPGINLGLIAYAGTATVLVSPTTNREATKNALDKLQFADRTATGEGIFTALQAIATVGAVIGGGDKPPPARIVLFSDGKETMPTNPDNPKGAFTAARTAKDQGVPISTISFGTPYGFVEINDQRQPVPVDDETLKKVAQLSGGNAYNAASLQELKSVYATLQQQIGYETIKGDASVGWVRLGALVLALAALTALLINRRLPT.

The next 2 helical transmembrane spans lie at Trp-18 to Leu-38 and Leu-67 to Thr-87. One can recognise a VWFA domain in the interval Val-98–Leu-294. Residues Val-309 to Ile-329 traverse the membrane as a helical segment.

Belongs to the UPF0353 family.

The protein resides in the cell membrane. The polypeptide is UPF0353 protein MAP_1207 (Mycolicibacterium paratuberculosis (strain ATCC BAA-968 / K-10) (Mycobacterium paratuberculosis)).